Here is a 390-residue protein sequence, read N- to C-terminus: Dual-specificity RNA methyltransferase RlmN (390 aa).

Glu-110 serves as the catalytic Proton acceptor. The 240-residue stretch at 116–355 (EADRATLCVS…VIIRKTRGDD (240 aa)) folds into the Radical SAM core domain. Cys-123 and Cys-360 are oxidised to a cystine. [4Fe-4S] cluster contacts are provided by Cys-130, Cys-134, and Cys-137. S-adenosyl-L-methionine is bound by residues 184 to 185 (GE), Ser-216, 238 to 240 (SLH), and Asn-317. The active-site S-methylcysteine intermediate is Cys-360.

It belongs to the radical SAM superfamily. RlmN family. The cofactor is [4Fe-4S] cluster.

It is found in the cytoplasm. It catalyses the reaction adenosine(2503) in 23S rRNA + 2 reduced [2Fe-2S]-[ferredoxin] + 2 S-adenosyl-L-methionine = 2-methyladenosine(2503) in 23S rRNA + 5'-deoxyadenosine + L-methionine + 2 oxidized [2Fe-2S]-[ferredoxin] + S-adenosyl-L-homocysteine. The enzyme catalyses adenosine(37) in tRNA + 2 reduced [2Fe-2S]-[ferredoxin] + 2 S-adenosyl-L-methionine = 2-methyladenosine(37) in tRNA + 5'-deoxyadenosine + L-methionine + 2 oxidized [2Fe-2S]-[ferredoxin] + S-adenosyl-L-homocysteine. In terms of biological role, specifically methylates position 2 of adenine 2503 in 23S rRNA and position 2 of adenine 37 in tRNAs. m2A2503 modification seems to play a crucial role in the proofreading step occurring at the peptidyl transferase center and thus would serve to optimize ribosomal fidelity. This Haemophilus influenzae (strain 86-028NP) protein is Dual-specificity RNA methyltransferase RlmN.